The following is a 514-amino-acid chain: Light-independent protochlorophyllide reductase subunit B (514 aa).

Position 36 (Asp36) interacts with [4Fe-4S] cluster. Asp300 acts as the Proton donor in catalysis. Residue Gly435–Met436 coordinates substrate.

It belongs to the ChlB/BchB/BchZ family. Protochlorophyllide reductase is composed of three subunits; ChlL, ChlN and ChlB. Forms a heterotetramer of two ChlB and two ChlN subunits. [4Fe-4S] cluster serves as cofactor.

It is found in the plastid. The protein resides in the chloroplast. The enzyme catalyses chlorophyllide a + oxidized 2[4Fe-4S]-[ferredoxin] + 2 ADP + 2 phosphate = protochlorophyllide a + reduced 2[4Fe-4S]-[ferredoxin] + 2 ATP + 2 H2O. It participates in porphyrin-containing compound metabolism; chlorophyll biosynthesis (light-independent). Component of the dark-operative protochlorophyllide reductase (DPOR) that uses Mg-ATP and reduced ferredoxin to reduce ring D of protochlorophyllide (Pchlide) to form chlorophyllide a (Chlide). This reaction is light-independent. The NB-protein (ChlN-ChlB) is the catalytic component of the complex. The protein is Light-independent protochlorophyllide reductase subunit B of Pleurastrum terricola (Filamentous green alga).